Here is a 308-residue protein sequence, read N- to C-terminus: 4-diphosphocytidyl-2-C-methyl-D-erythritol kinase (308 aa).

K23 is a catalytic residue. 108–118 (PVAAGIGGGSA) contacts ATP. The active site involves D150.

This sequence belongs to the GHMP kinase family. IspE subfamily.

It catalyses the reaction 4-CDP-2-C-methyl-D-erythritol + ATP = 4-CDP-2-C-methyl-D-erythritol 2-phosphate + ADP + H(+). The protein operates within isoprenoid biosynthesis; isopentenyl diphosphate biosynthesis via DXP pathway; isopentenyl diphosphate from 1-deoxy-D-xylulose 5-phosphate: step 3/6. Its function is as follows. Catalyzes the phosphorylation of the position 2 hydroxy group of 4-diphosphocytidyl-2C-methyl-D-erythritol. The polypeptide is 4-diphosphocytidyl-2-C-methyl-D-erythritol kinase (Nitrobacter winogradskyi (strain ATCC 25391 / DSM 10237 / CIP 104748 / NCIMB 11846 / Nb-255)).